The chain runs to 115 residues: MNLMLTLLTNTLLASLLVLIAFWLPQLNIYAEKTSPYECGFDPMGSARLPFSMKFFLVAITFLLFDLEIALLLPLPWASQTTNLNTMLIMALILISLLAISLAYEWTQKGLEWTE.

A run of 3 helical transmembrane segments spans residues 3–23 (LMLT…IAFW), 55–75 (FFLV…LLPL), and 84–104 (LNTM…SLAY).

It belongs to the complex I subunit 3 family. As to quaternary structure, core subunit of respiratory chain NADH dehydrogenase (Complex I) which is composed of 45 different subunits. Interacts with TMEM186. Interacts with TMEM242.

The protein resides in the mitochondrion inner membrane. It catalyses the reaction a ubiquinone + NADH + 5 H(+)(in) = a ubiquinol + NAD(+) + 4 H(+)(out). In terms of biological role, core subunit of the mitochondrial membrane respiratory chain NADH dehydrogenase (Complex I) which catalyzes electron transfer from NADH through the respiratory chain, using ubiquinone as an electron acceptor. Essential for the catalytic activity of complex I. The sequence is that of NADH-ubiquinone oxidoreductase chain 3 from Equus asinus (Donkey).